The sequence spans 198 residues: Glutamyl-tRNA(Gln) amidotransferase subunit C, mitochondrial (198 aa).

The protein belongs to the GatC family. Subunit of the heterotrimeric GatCAB amidotransferase (AdT) complex, composed of A, B and C subunits.

The protein resides in the mitochondrion. The catalysed reaction is L-glutamyl-tRNA(Gln) + L-glutamine + ATP + H2O = L-glutaminyl-tRNA(Gln) + L-glutamate + ADP + phosphate + H(+). Its function is as follows. Allows the formation of correctly charged Gln-tRNA(Gln) through the transamidation of misacylated Glu-tRNA(Gln) in the mitochondria. The reaction takes place in the presence of glutamine and ATP through an activated gamma-phospho-Glu-tRNA(Gln). The protein is Glutamyl-tRNA(Gln) amidotransferase subunit C, mitochondrial of Caenorhabditis remanei (Caenorhabditis vulgaris).